Reading from the N-terminus, the 185-residue chain is Ribosome-recycling factor (185 aa).

Belongs to the RRF family.

Its subcellular location is the cytoplasm. Its function is as follows. Responsible for the release of ribosomes from messenger RNA at the termination of protein biosynthesis. May increase the efficiency of translation by recycling ribosomes from one round of translation to another. The sequence is that of Ribosome-recycling factor from Teredinibacter turnerae (strain ATCC 39867 / T7901).